A 1413-amino-acid polypeptide reads, in one-letter code: DNA-directed RNA polymerase subunit beta' (1413 aa).

4 residues coordinate Zn(2+): Cys70, Cys72, Cys85, and Cys88. Mg(2+) contacts are provided by Asp460, Asp462, and Asp464. The Zn(2+) site is built by Cys819, Cys893, Cys900, and Cys903. Residues Glu1393 to Glu1413 form a disordered region.

Belongs to the RNA polymerase beta' chain family. As to quaternary structure, the RNAP catalytic core consists of 2 alpha, 1 beta, 1 beta' and 1 omega subunit. When a sigma factor is associated with the core the holoenzyme is formed, which can initiate transcription. The cofactor is Mg(2+). Zn(2+) is required as a cofactor.

It catalyses the reaction RNA(n) + a ribonucleoside 5'-triphosphate = RNA(n+1) + diphosphate. DNA-dependent RNA polymerase catalyzes the transcription of DNA into RNA using the four ribonucleoside triphosphates as substrates. This is DNA-directed RNA polymerase subunit beta' from Paraburkholderia phymatum (strain DSM 17167 / CIP 108236 / LMG 21445 / STM815) (Burkholderia phymatum).